The following is a 216-amino-acid chain: Ribosomal RNA small subunit methyltransferase G (216 aa).

Residues G81, L86, 132–133, and R147 contribute to the S-adenosyl-L-methionine site; that span reads VE.

It belongs to the methyltransferase superfamily. RNA methyltransferase RsmG family.

Its subcellular location is the cytoplasm. It catalyses the reaction guanosine(527) in 16S rRNA + S-adenosyl-L-methionine = N(7)-methylguanosine(527) in 16S rRNA + S-adenosyl-L-homocysteine. Specifically methylates the N7 position of guanine in position 527 of 16S rRNA. This chain is Ribosomal RNA small subunit methyltransferase G, found in Hydrogenovibrio crunogenus (strain DSM 25203 / XCL-2) (Thiomicrospira crunogena).